A 156-amino-acid polypeptide reads, in one-letter code: uncharacterized protein (156 aa).

The active site involves histidine 55.

It belongs to the thioester dehydratase family. FabZ subfamily.

This is an uncharacterized protein from Halalkalibacterium halodurans (strain ATCC BAA-125 / DSM 18197 / FERM 7344 / JCM 9153 / C-125) (Bacillus halodurans).